The primary structure comprises 39 residues: Photosystem II reaction center protein J (39 aa).

Residues 7-27 (IPLWLVGLVGGLAVITMLSLF) form a helical membrane-spanning segment.

This sequence belongs to the PsbJ family. PSII is composed of 1 copy each of membrane proteins PsbA, PsbB, PsbC, PsbD, PsbE, PsbF, PsbH, PsbI, PsbJ, PsbK, PsbL, PsbM, PsbT, PsbX, PsbY, PsbZ, Psb30/Ycf12, at least 3 peripheral proteins of the oxygen-evolving complex and a large number of cofactors. It forms dimeric complexes.

The protein resides in the plastid. The protein localises to the chloroplast thylakoid membrane. Its function is as follows. One of the components of the core complex of photosystem II (PSII). PSII is a light-driven water:plastoquinone oxidoreductase that uses light energy to abstract electrons from H(2)O, generating O(2) and a proton gradient subsequently used for ATP formation. It consists of a core antenna complex that captures photons, and an electron transfer chain that converts photonic excitation into a charge separation. The protein is Photosystem II reaction center protein J of Trieres chinensis (Marine centric diatom).